Here is a 31-residue protein sequence, read N- to C-terminus: Cyclotide cter-C (31 aa).

The cyclopeptide (Gly-Asp) cross-link spans 1–31 (GVPCAESCVWIPCTVTALLGCSCKDKVCYLD). 3 cysteine pairs are disulfide-bonded: C4/C21, C8/C23, and C13/C28.

Contains 3 disulfide bonds. In terms of processing, this is a cyclic peptide.

Functionally, probably participates in a plant defense mechanism. This chain is Cyclotide cter-C, found in Clitoria ternatea (Butterfly pea).